Here is a 260-residue protein sequence, read N- to C-terminus: Ribonuclease HII (260 aa).

The RNase H type-2 domain occupies 73–260 (LHIAGIDEAG…APVQQQLDIV (188 aa)). The a divalent metal cation site is built by Asp-79, Glu-80, and Asp-171.

This sequence belongs to the RNase HII family. Mn(2+) serves as cofactor. It depends on Mg(2+) as a cofactor.

It is found in the cytoplasm. It carries out the reaction Endonucleolytic cleavage to 5'-phosphomonoester.. In terms of biological role, endonuclease that specifically degrades the RNA of RNA-DNA hybrids. This Desulfitobacterium hafniense (strain DSM 10664 / DCB-2) protein is Ribonuclease HII.